The following is a 1156-amino-acid chain: MSGYDNRDDYRHSSSSSHHRSRNSKHDSSSSSYRSHGYAPTRRRSRSPSSYHSSSRSHRDHTTDPYPNGSGHDRRHDRDRNRERDRRDHDSPIEAAPSPDGRRFHVEGAPRQGGRRRWDEGAPTPPTAAAPVHVSDPTRSSLNTQLPSRPIVAPPGMAPGPPPSLPSSTPIVPSTGISISPEEQAKLAKKARLEAWRKEQAAKKALEEARQRARSIASAVAPSSQRTESFSSSSTPQTAPTSINAAGLRTLSLRTDPSRTTAQNRSRTMMDDASESSKRIHLSRLGDLPPLDPSIDTAHIATTSVDAEDDDHQLGVAPPTQGSSAAAMDVDDDDEEEDPLDAFMLTVKSQVAQVNDDDRRKASASGGHERTQAKSKAVVLGRDDSDGEAEDQYEELDELDRVGMATEDLLALAAKKVKKKDLVTVDHSAIDYEPFNKAFYHPPAEIQDMSEELANQIRLEMDAITVRGRDCPKPLTKWSHCGLPASCLDVIKRLGYSAPTPIQSQAMPAIMSGRDIIGVAKTGSGKTMAFLLPMFRHIKDQRPVEPSEGPVGIIMTPTRELAVQIYREMRPFIKALGLRAACVYGGAPISEQIAEMKKTADIVVATPGRLIDLLTANSGRVTNLYRVTYLVLDEADRMFDMGFEPQVMKILNNIRPDRQTVLFSATFPKQMESLARKVLKNKPLEITVGGRSVVAAEIEQIVEVRSEDTKFHRLLEILGELYNREKDARTLIFVDRQEAADDLLKDLIRKGYVTMSLHGGKDQVDRDETISDFKAGNVPIVTATSVAARGLDVKQLKLVINYDVPNHMEDYVHRAGRTGRAGQKGTCITFITPEQDRYARDIIAALKASAAHVPPELEAMAASFKEKLAAGKAKAAGSGFGGKGLDRFELDREKTLKAQKSAYGEADDDAKAAAAGDSSEDKAKTGAPPGASSSEDQLSKIQGMKIEIMQGAAPESVRDNKTLSASQEASAAAAAAAAARSKAEPEQELKEAAQLKAQEAALEAAKAHGADTTKLAAVLENIRRQANARKEAAKNSELDKHKDRKARDPDATDYHAIVPINDFPQRARWRVTNKETMRHLIESTGASITNKGVFYKEGTEPQPGEPPKLQLLIESNTKSMVEDAVREIQRLLVEATQAVLEAEARNPGTTGRYTVV.

Composition is skewed to basic and acidic residues over residues Met-1–His-12 and Gly-71–Pro-92. Disordered stretches follow at residues Met-1–Ile-177, Ile-216–Glu-337, and Val-351–Glu-390. A compositionally biased stretch (polar residues) spans Pro-137–Pro-147. A compositionally biased stretch (pro residues) spans Val-152–Leu-165. Low complexity-rich tracts occupy residues Pro-166 to Thr-175 and Pro-222 to Ser-242. Residues Ser-252–Arg-267 are compositionally biased toward polar residues. Residues Asp-356–Gln-372 show a composition bias toward basic and acidic residues. The Q motif motif lies at Thr-476–Ser-504. Positions Met-507–Glu-685 constitute a Helicase ATP-binding domain. Ala-520–Thr-527 contributes to the ATP binding site. A DEAD box motif is present at residues Asp-633 to Asp-636. One can recognise a Helicase C-terminal domain in the interval Glu-697–Ala-861. Disordered regions lie at residues Lys-900–Gln-937 and Ala-1028–Pro-1049.

The protein belongs to the DEAD box helicase family. DDX46/PRP5 subfamily.

It localises to the nucleus. It catalyses the reaction ATP + H2O = ADP + phosphate + H(+). Functionally, ATP-dependent RNA helicase involved spliceosome assembly and in nuclear splicing. Catalyzes an ATP-dependent conformational change of U2 snRNP. Bridges U1 and U2 snRNPs and enables stable U2 snRNP association with intron RNA. The polypeptide is Pre-mRNA-processing ATP-dependent RNA helicase PRP5 (PRP5) (Mycosarcoma maydis (Corn smut fungus)).